The sequence spans 567 residues: Thiol:disulfide interchange protein DsbD (567 aa).

The signal sequence occupies residues 1 to 19; sequence MAQRIFTLILLLCSTSAFA. Disulfide bonds link Cys-122–Cys-128 and Cys-185–Cys-307. Transmembrane regions (helical) follow at residues 170-192, 212-234, 246-268, 297-319, 326-348, 358-380, and 387-409; these read ALWA…MYPL, LAFI…VAAA, YVLI…LFTL, GAIA…LLYI, WLGG…LVTV, GPWM…VFLL, and AWGL…ITSL. Positions 435–567 constitute a Thioredoxin domain; it reads QDWAFGSPSA…FSAHLHDRQP (133 aa). A disulfide bridge links Cys-482 with Cys-485.

This sequence belongs to the thioredoxin family. DsbD subfamily.

Its subcellular location is the cell inner membrane. It catalyses the reaction [protein]-dithiol + NAD(+) = [protein]-disulfide + NADH + H(+). It carries out the reaction [protein]-dithiol + NADP(+) = [protein]-disulfide + NADPH + H(+). Required to facilitate the formation of correct disulfide bonds in some periplasmic proteins and for the assembly of the periplasmic c-type cytochromes. Acts by transferring electrons from cytoplasmic thioredoxin to the periplasm. This transfer involves a cascade of disulfide bond formation and reduction steps. This is Thiol:disulfide interchange protein DsbD from Salmonella typhimurium (strain LT2 / SGSC1412 / ATCC 700720).